The following is a 281-amino-acid chain: Bifunctional protein FolD (281 aa).

Residues 165–167 (GRS) and Ser-190 each bind NADP(+).

It belongs to the tetrahydrofolate dehydrogenase/cyclohydrolase family. As to quaternary structure, homodimer.

The catalysed reaction is (6R)-5,10-methylene-5,6,7,8-tetrahydrofolate + NADP(+) = (6R)-5,10-methenyltetrahydrofolate + NADPH. It carries out the reaction (6R)-5,10-methenyltetrahydrofolate + H2O = (6R)-10-formyltetrahydrofolate + H(+). The protein operates within one-carbon metabolism; tetrahydrofolate interconversion. In terms of biological role, catalyzes the oxidation of 5,10-methylenetetrahydrofolate to 5,10-methenyltetrahydrofolate and then the hydrolysis of 5,10-methenyltetrahydrofolate to 10-formyltetrahydrofolate. The chain is Bifunctional protein FolD from Polaromonas sp. (strain JS666 / ATCC BAA-500).